Reading from the N-terminus, the 432-residue chain is 5-hydroxybenzimidazole synthase BzaA (432 aa).

Substrate-binding positions include Met95, Tyr124, His163, 185-187 (SYG), and 226-229 (DGMR). His269 contacts Zn(2+). Phe292 is a binding site for substrate. His333 is a Zn(2+) binding site. The [4Fe-4S] cluster site is built by Cys409, Cys412, and Cys416.

The protein belongs to the ThiC family. 5-hydroxybenzimidazole synthase subfamily. Requires [4Fe-4S] cluster as cofactor.

It carries out the reaction 5-amino-1-(5-phospho-beta-D-ribosyl)imidazole + AH2 + S-adenosyl-L-methionine = 5-hydroxybenzimidazole + 5'-deoxyadenosine + formate + L-methionine + A + NH4(+) + phosphate + 2 H(+). In terms of biological role, together with BzaB, probably catalyzes the conversion of aminoimidazole ribotide (AIR) to 5-hydroxybenzimidazole (5-HBI) in a radical S-adenosyl-L-methionine (SAM)-dependent reaction. Is thus involved in the anaerobic biosynthesis of the benzimidazole lower axial ligand of the cobamide produced by M.thermoacetica. Requires BzaB for catalytic activity, as BzaA alone displays no activity. The chain is 5-hydroxybenzimidazole synthase BzaA from Moorella thermoacetica (strain ATCC 39073 / JCM 9320).